The primary structure comprises 270 residues: uncharacterized protein (270 aa).

Its subcellular location is the virion. This is an uncharacterized protein from Acanthamoeba polyphaga (Amoeba).